A 259-amino-acid chain; its full sequence is Thiazole synthase (259 aa).

Lys95 (schiff-base intermediate with DXP) is an active-site residue. 1-deoxy-D-xylulose 5-phosphate-binding positions include Gly156, Ala183–Gly184, and Asn205–Ser206.

It belongs to the ThiG family. In terms of assembly, homotetramer. Forms heterodimers with either ThiH or ThiS.

The protein localises to the cytoplasm. It catalyses the reaction [ThiS sulfur-carrier protein]-C-terminal-Gly-aminoethanethioate + 2-iminoacetate + 1-deoxy-D-xylulose 5-phosphate = [ThiS sulfur-carrier protein]-C-terminal Gly-Gly + 2-[(2R,5Z)-2-carboxy-4-methylthiazol-5(2H)-ylidene]ethyl phosphate + 2 H2O + H(+). The protein operates within cofactor biosynthesis; thiamine diphosphate biosynthesis. Its function is as follows. Catalyzes the rearrangement of 1-deoxy-D-xylulose 5-phosphate (DXP) to produce the thiazole phosphate moiety of thiamine. Sulfur is provided by the thiocarboxylate moiety of the carrier protein ThiS. In vitro, sulfur can be provided by H(2)S. This chain is Thiazole synthase, found in Coxiella burnetii (strain CbuK_Q154) (Coxiella burnetii (strain Q154)).